Here is a 286-residue protein sequence, read N- to C-terminus: Puff II/9-1 protein (286 aa).

The first 19 residues, 1–19 (MKQFIVLTVVLLAIQELQG), serve as a signal peptide directing secretion. Positions 61-235 (ITAIKKDNDF…ENALNTLRCE (175 aa)) are helical. An N-linked (GlcNAc...) asparagine glycan is attached at Asn156.

The sequence is that of Puff II/9-1 protein (II/9-1) from Bradysia coprophila (Dark-winged fungus gnat).